The following is a 432-amino-acid chain: Transcriptional adapter 3 (432 aa).

A Glycyl lysine isopeptide (Lys-Gly) (interchain with G-Cter in SUMO2) cross-link involves residue K21. Residues 40-69 (IEELDTLQLELETLLSSASRRLRVLEAETQ) adopt a coiled-coil conformation. A disordered region spans residues 87–126 (GRDHELGAPPKHGKPKKQKLEGKAGHGPGPGPGRPKSKNL). A Glycyl lysine isopeptide (Lys-Gly) (interchain with G-Cter in SUMO2) cross-link involves residue K129. The interval 272–319 (NIISPMEDSPIPDMSGKESGADGASTSPRNQNKPFSVPHTKSLESRIK) is disordered. Residues S280 and S298 each carry the phosphoserine modification. The span at 295-305 (ASTSPRNQNKP) shows a compositional bias: polar residues. A coiled-coil region spans residues 367–407 (LLRLAKEEVSRQELRQRVRMADNEVMDAFRKIMAARQKKRT). Position 418 is an N6-acetyllysine (K418).

This sequence belongs to the NGG1 family. In terms of assembly, the PCAF complex is composed of a number of TBP-associated factors (TAFS), such as TAF5, TAF5L, TAF6, TAF6L, TAF9, TAF10 and TAF12, PCAF, and also PCAF-associated factors (PAFs), such as TADA2L/ADA2, TADA3L/ADA3 and SPT3. Interacts directly with TADA2L and PCAF and also with the high-risk HPV oncoprotein E6. Component of the STAGA transcription coactivator-HAT complex, at least composed of SUPT3H, GCN5L2, TAF5L, TAF6L, SUPT7L, TADA3L, TAD1L, TAF10, TAF12, TRRAP and TAF9. Component of the TFTC-HAT complex. Component of the ADA2A-containing complex (ATAC), composed of KAT14, KAT2A, TADA2L, TADA3L, ZZ3, MBIP, WDR5, YEATS2, CCDC101 and DR1. In terms of tissue distribution, ubiquitously expressed.

It localises to the nucleus. In terms of biological role, functions as a component of the PCAF complex. The PCAF complex is capable of efficiently acetylating histones in a nucleosomal context. The PCAF complex could be considered as the human version of the yeast SAGA complex. Also known as a coactivator for p53/TP53-dependent transcriptional activation. Component of the ATAC complex, a complex with histone acetyltransferase activity on histones H3 and H4. This is Transcriptional adapter 3 (TADA3) from Homo sapiens (Human).